A 297-amino-acid chain; its full sequence is Large ribosomal subunit protein uL18 (297 aa).

At G2 the chain carries N-acetylglycine. N6-acetyllysine is present on residues K5 and K48. S185 bears the Phosphoserine mark. Position 220 is an N6-acetyllysine; alternate (K220). K220 participates in a covalent cross-link: Glycyl lysine isopeptide (Lys-Gly) (interchain with G-Cter in SUMO1); alternate. K220 is covalently cross-linked (Glycyl lysine isopeptide (Lys-Gly) (interchain with G-Cter in SUMO2); alternate). T232 carries the phosphothreonine modification. The disordered stretch occupies residues 253-297; that stretch reads YEKKPKREVKKKRWNRPKMSLAQKKDRVAQKKASFLRAQERAAES. Residues 258–268 show a composition bias toward basic residues; the sequence is KREVKKKRWNR. S272 is subject to Phosphoserine.

The protein belongs to the universal ribosomal protein uL18 family. In terms of assembly, component of the large ribosomal subunit (LSU). Part of the 5S RNP complex, which is a LSU subcomplex composed of the 5S RNA, RPL5 and RPL11. Component of a hexameric 5S RNP precursor complex, composed of 5S RNA, RRS1, RPF2/BXDC1, RPL5, RPL11 and HEATR3; this complex acts as a precursor for ribosome assembly. Interacts with isoform 1 of NVL in an ATP-dependent manner. Interacts with RRP1B. Interacts with IPO5, IPO7 and KPNB1; these interactions may be involved in RPL5 nuclear import for the assembly of ribosomal subunits.

It localises to the cytoplasm. Its subcellular location is the nucleus. The protein localises to the nucleolus. In terms of biological role, component of the ribosome, a large ribonucleoprotein complex responsible for the synthesis of proteins in the cell. The small ribosomal subunit (SSU) binds messenger RNAs (mRNAs) and translates the encoded message by selecting cognate aminoacyl-transfer RNA (tRNA) molecules. The large subunit (LSU) contains the ribosomal catalytic site termed the peptidyl transferase center (PTC), which catalyzes the formation of peptide bonds, thereby polymerizing the amino acids delivered by tRNAs into a polypeptide chain. The nascent polypeptides leave the ribosome through a tunnel in the LSU and interact with protein factors that function in enzymatic processing, targeting, and the membrane insertion of nascent chains at the exit of the ribosomal tunnel. As part of the 5S RNP/5S ribonucleoprotein particle it is an essential component of the LSU, required for its formation and the maturation of rRNAs. It also couples ribosome biogenesis to p53/TP53 activation. As part of the 5S RNP it accumulates in the nucleoplasm and inhibits MDM2, when ribosome biogenesis is perturbed, mediating the stabilization and the activation of TP53. The polypeptide is Large ribosomal subunit protein uL18 (RPL5) (Oryctolagus cuniculus (Rabbit)).